The primary structure comprises 90 residues: Probable small nuclear ribonucleoprotein E (90 aa).

One can recognise a Sm domain in the interval 14-89; it reads VNLIFRYLQN…ITLIHAAAQE (76 aa).

It belongs to the snRNP Sm proteins family. In terms of assembly, core component of the spliceosomal U1, U2, U4 and U5 small nuclear ribonucleoproteins (snRNPs), the building blocks of the spliceosome.

The protein localises to the nucleus. Its subcellular location is the cytoplasm. It localises to the cytosol. Plays a role in pre-mRNA splicing as a core component of the spliceosomal U1, U2, U4 and U5 small nuclear ribonucleoproteins (snRNPs), the building blocks of the spliceosome. In Caenorhabditis briggsae, this protein is Probable small nuclear ribonucleoprotein E (snr-6).